Consider the following 400-residue polypeptide: Nicotinate phosphoribosyltransferase (400 aa).

Phosphohistidine; by autocatalysis is present on His220.

Belongs to the NAPRTase family. Post-translationally, transiently phosphorylated on a His residue during the reaction cycle. Phosphorylation strongly increases the affinity for substrates and increases the rate of nicotinate D-ribonucleotide production. Dephosphorylation regenerates the low-affinity form of the enzyme, leading to product release.

The enzyme catalyses nicotinate + 5-phospho-alpha-D-ribose 1-diphosphate + ATP + H2O = nicotinate beta-D-ribonucleotide + ADP + phosphate + diphosphate. It participates in cofactor biosynthesis; NAD(+) biosynthesis; nicotinate D-ribonucleotide from nicotinate: step 1/1. Functionally, catalyzes the synthesis of beta-nicotinate D-ribonucleotide from nicotinate and 5-phospho-D-ribose 1-phosphate at the expense of ATP. This is Nicotinate phosphoribosyltransferase from Cronobacter sakazakii (strain ATCC BAA-894) (Enterobacter sakazakii).